Consider the following 146-residue polypeptide: Leghemoglobin (146 aa).

Residues 3 to 146 (AFTEKQEALV…FAAGIKKAYA (144 aa)) enclose the Globin domain. A nitrated tyrosine mark is found at Tyr26 and Tyr31. Position 46 (Ser46) interacts with heme b. Ser46 is subject to Phosphoserine. O2 is bound at residue His62. Heme b is bound by residues His93 and Lys96. Nitrated tyrosine is present on Tyr134.

It belongs to the plant globin family. In terms of assembly, monomer. In terms of processing, nitrated mainly at Tyr-31 and, to a lower extent, at Tyr-26 and Tyr-134, in effective nodules and particularly in hypoxic conditions; this mechanism may play a protective role in the symbiosis by buffering toxic peroxynitrite NO(2)(-). Nitration level decrease during nodule senescence. Post-translationally, phosphorylation at Ser-46 disrupts the molecular environment of its porphyrin ring oxygen binding pocket, thus leading to a reduced oxygen consumption and to the delivery of oxygen O(2) to symbiosomes. Root nodules.

The protein localises to the cytoplasm. It localises to the cytosol. Its subcellular location is the nucleus. In terms of biological role, leghemoglobin that reversibly binds oxygen O(2) through a pentacoordinated heme iron. In root nodules, facilitates the diffusion of oxygen to the bacteroids while preventing the bacterial nitrogenase from being inactivated by buffering dioxygen, nitric oxide and carbon monoxide, and promoting the formation of reactive oxygen species (ROS, e.g. H(2)O(2)). This role is essential for symbiotic nitrogen fixation (SNF). This chain is Leghemoglobin, found in Phaseolus vulgaris (Kidney bean).